The primary structure comprises 435 residues: AP-2 complex subunit mu (435 aa).

One can recognise an MHD domain in the interval 170-434 (RNELFLDVLE…IGRSGIYETR (265 aa)). A 1,2-diacyl-sn-glycero-3-phospho-(1D-myo-inositol-3,4,5-trisphosphate)-binding residues include lysine 341, lysine 345, and lysine 354.

Belongs to the adaptor complexes medium subunit family. In terms of assembly, adaptor protein complex 2 (AP-2) is a heterotetramer composed of two large adaptins (alpha-type subunit and beta-type subunit), a medium adaptin (mu-type subunit) and a small adaptin (sigma-type subunit).

The protein resides in the cell membrane. It localises to the membrane. Its subcellular location is the coated pit. Component of the adaptor complexes which link clathrin to receptors in coated vesicles. Clathrin-associated protein complexes are believed to interact with the cytoplasmic tails of membrane proteins, leading to their selection and concentration. AP50 is a subunit of the plasma membrane adaptor. The complex binds polyphosphoinositide-containing lipids. This is AP-2 complex subunit mu (ap2m1) from Xenopus tropicalis (Western clawed frog).